Reading from the N-terminus, the 637-residue chain is MSQQETHGFQTEVKQLLHLMIHSLYSNKEIFLRELVSNAADAADKLRYLALTNDALYEGDGELRVRISADKDKGTVTIEDNGVGMTRDGVIEHLGTIAKSGTAEFFKNLSGEASKDSQLIGQFGVGFYSAFIVAKKVTVRTRAAGHKADEAVLWESEGEGSFTVETITKASRGTEITLHLRDEEKEFADDWRLRSIITKYSDHISVPVEMWQEGTPERDGPDGEKIPATEGYWKVMNKATALWMRNKSEISDEEYQEFYKHISHDYTDALLWSHNRVEGKQEYTNLLYIPSKAPWDLWNRDRKHGLKLFVQRVFIMDDAEQFMPSYLRFVQGLIDSNDLPLNVSREILQDNHITKAMRTGITKRVLGMLEKLAKDDAEKYQQFWAEFGQVLKEGPAEDFANRERIAGLLRFASTHTGSAAPTVSLDDYISRMKEGQTKIYYIVADSYDAAANSPHLELLRKKGIEVLLMSERIDEWLINHLTEYKEKQLHSVTRGELELGELEDAAEKEAQEKLAEESAPLIERIKAALGTKVADVKVTSRLTDTPACVVTGEGEMSTQMIKLMQAAGQPVPEVKPTFEVNPAHPLVSRLNDLQDETAFADWSNLLLQQAQLSEKGSLADPSAFIKLMNQMLLANMK.

Residues 1–345 (MSQQETHGFQ…SNDLPLNVSR (345 aa)) are a; substrate-binding. Residues 346–562 (EILQDNHITK…EGEMSTQMIK (217 aa)) are b. The segment at 563-637 (LMQAAGQPVP…MNQMLLANMK (75 aa)) is c.

It belongs to the heat shock protein 90 family. In terms of assembly, homodimer.

The protein localises to the cytoplasm. Functionally, molecular chaperone. Has ATPase activity. The chain is Chaperone protein HtpG from Shewanella putrefaciens (strain CN-32 / ATCC BAA-453).